We begin with the raw amino-acid sequence, 301 residues long: Uricase (301 aa).

Active-site charge relay system residues include Lys-11 and Thr-58. Urate-binding residues include Thr-58, Asp-59, Phe-160, Arg-177, Val-228, Gln-229, and Asn-255. His-257 serves as the catalytic Charge relay system. The Microbody targeting signal signature appears at 299–301; that stretch reads AKL.

Belongs to the uricase family.

The protein localises to the peroxisome. The enzyme catalyses urate + O2 + H2O = 5-hydroxyisourate + H2O2. It participates in purine metabolism; urate degradation; (S)-allantoin from urate: step 1/3. Its function is as follows. Catalyzes the oxidation of uric acid to 5-hydroxyisourate, which is further processed to form (S)-allantoin. This Emericella nidulans (strain FGSC A4 / ATCC 38163 / CBS 112.46 / NRRL 194 / M139) (Aspergillus nidulans) protein is Uricase (uaZ).